We begin with the raw amino-acid sequence, 727 residues long: Glycerol-3-phosphate dehydrogenase, mitochondrial (727 aa).

Residues 1–42 (MAFQKAVKRTVLVCGGALATVLGLSQCSHYRRKQVNLACLKA) constitute a mitochondrion transit peptide. 71–99 (DILVIGGGATGSGCALDAVTRGLKTALVE) lines the FAD pocket. Residue Tyr-601 is modified to Phosphotyrosine. EF-hand domains follow at residues 623–658 (SDIERYTKRFHKFDADEKGFITIVDVQRVLENINVK) and 659–694 (IDENTLHEILSEVDLNKNGQVELNEFLQLMSAIQKG). 5 residues coordinate Ca(2+): Asp-672, Asn-674, Asn-676, Gln-678, and Glu-683.

It belongs to the FAD-dependent glycerol-3-phosphate dehydrogenase family. FAD is required as a cofactor.

It localises to the mitochondrion. It carries out the reaction a quinone + sn-glycerol 3-phosphate = dihydroxyacetone phosphate + a quinol. The protein operates within polyol metabolism; glycerol degradation via glycerol kinase pathway; glycerone phosphate from sn-glycerol 3-phosphate (aerobic route): step 1/1. Calcium-binding enhance the activity of the enzyme. Functionally, calcium-responsive mitochondrial glycerol-3-phosphate dehydrogenase which seems to be a key component of the pancreatic beta-cell glucose-sensing device. The polypeptide is Glycerol-3-phosphate dehydrogenase, mitochondrial (GPD2) (Mesocricetus auratus (Golden hamster)).